A 353-amino-acid chain; its full sequence is Melanin-concentrating hormone receptor 1 (353 aa).

The interval 1-26 (MDLQTSLLSTGPNASNISDGQDNLTL) is disordered. Residues 1–45 (MDLQTSLLSTGPNASNISDGQDNLTLPGSPPRTGSVSYINIIMPS) are Extracellular-facing. 3 N-linked (GlcNAc...) asparagine glycosylation sites follow: Asn-13, Asn-16, and Asn-23. A helical membrane pass occupies residues 46–66 (VFGTICLLGIVGNSTVIFAVV). At 67 to 79 (KKSKLHWCSNVPD) the chain is on the cytoplasmic side. A helical membrane pass occupies residues 80–100 (IFIINLSVVDLLFLLGMPFMI). At 101–116 (HQLMGNGVWHFGETMC) the chain is on the extracellular side. Cysteines 116 and 194 form a disulfide. Residues 117–139 (TLITAMDANSQFTSTYILTAMTI) form a helical membrane-spanning segment. Residues 140–161 (DRYLATVHPISSTKFRKPSMAT) lie on the Cytoplasmic side of the membrane. The chain crosses the membrane as a helical span at residues 162–182 (LVICLLWALSFISITPVWLYA). The Extracellular segment spans residues 183-204 (RLIPFPGGAVGCGIRLPNPDTD). A helical membrane pass occupies residues 205–225 (LYWFTLYQFFLAFALPFVVIT). The Cytoplasmic segment spans residues 226-256 (AAYVKILQRMTSSVAPASQRSIRLRTKRVTR). The chain crosses the membrane as a helical span at residues 257–277 (TAIAICLVFFVCWAPYYVLQL). Over 278–294 (TQLSISRPTLTFVYLYN) the chain is Extracellular. The chain crosses the membrane as a helical span at residues 295–315 (AAISLGYANSCLNPFVYIVLC). The Cytoplasmic segment spans residues 316–353 (ETFRKRLVLSVKPAAQGQLRTVSNAQTADEERTESKGT).

The protein belongs to the G-protein coupled receptor 1 family. In terms of assembly, interacts with NCDN. As to expression, high level in the brain, moderate amounts in the eye and skeletal muscle, and small amounts in tongue and pituitary.

It is found in the cell membrane. Its function is as follows. Receptor for melanin-concentrating hormone, coupled to G proteins that inhibit adenylyl cyclase. In Rattus norvegicus (Rat), this protein is Melanin-concentrating hormone receptor 1.